The primary structure comprises 64 residues: Large ribosomal subunit protein bL33 (64 aa).

This sequence belongs to the bacterial ribosomal protein bL33 family.

This chain is Large ribosomal subunit protein bL33, found in Rippkaea orientalis (strain PCC 8801 / RF-1) (Cyanothece sp. (strain PCC 8801)).